We begin with the raw amino-acid sequence, 326 residues long: Adenosine receptor A1 (326 aa).

At 1-10 (MPPYISAFQA) the chain is on the extracellular side. The helical transmembrane segment at 11-33 (AYIGIEVLIALVSVPGNVLVIWA) threads the bilayer. Topologically, residues 34-46 (VKVNQALRDATFC) are cytoplasmic. A helical transmembrane segment spans residues 47 to 69 (FIVSLAVADVAVGALVIPLAILI). Topologically, residues 70–80 (NIGPQTYFHTC) are extracellular. A disulfide bridge connects residues Cys-80 and Cys-169. A helical transmembrane segment spans residues 81–102 (LMVACPVLILTQSSILALLAIA). Residues 103 to 123 (VDRYLRVKIPLRYKTVVTQRR) lie on the Cytoplasmic side of the membrane. A helical transmembrane segment spans residues 124–146 (AAVAIAGCWILSLVVGLTPMFGW). At 147 to 176 (NNLSVVEQDWRANGSVGEPVIKCEFEKVIS) the chain is on the extracellular side. Residues Asn-148 and Asn-159 are each glycosylated (N-linked (GlcNAc...) asparagine). Residues 177-201 (MEYMVYFNFFVWVLPPLLLMVLIYL) traverse the membrane as a helical segment. At 202–235 (EVFYLIRKQLNKKVSASSGDPQKYYGKELKIAKS) the chain is on the cytoplasmic side. The chain crosses the membrane as a helical span at residues 236–259 (LALILFLFALSWLPLHILNCITLF). The Extracellular portion of the chain corresponds to 260-267 (CPTCQKPS). A helical transmembrane segment spans residues 268 to 292 (ILIYIAIFLTHGNSAMNPIVYAFRI). Over 293-326 (HKFRVTFLKIWNDHFRCQPKPPIDEDLPEEKAED) the chain is Cytoplasmic. Cys-309 carries the S-palmitoyl cysteine lipid modification.

Belongs to the G-protein coupled receptor 1 family. As to expression, widely expressed in brain and spinal cord.

The protein resides in the cell membrane. Receptor for adenosine. The activity of this receptor is mediated by G proteins which inhibit adenylyl cyclase. The chain is Adenosine receptor A1 (Adora1) from Rattus norvegicus (Rat).